We begin with the raw amino-acid sequence, 37 residues long: Large ribosomal subunit protein bL36c (37 aa).

This sequence belongs to the bacterial ribosomal protein bL36 family.

The protein resides in the plastid. This Cuscuta exaltata (Tall dodder) protein is Large ribosomal subunit protein bL36c.